The primary structure comprises 94 residues: Small ribosomal subunit protein bS18 (94 aa).

It belongs to the bacterial ribosomal protein bS18 family. Part of the 30S ribosomal subunit. Forms a tight heterodimer with protein bS6.

Functionally, binds as a heterodimer with protein bS6 to the central domain of the 16S rRNA, where it helps stabilize the platform of the 30S subunit. This chain is Small ribosomal subunit protein bS18, found in Polaromonas naphthalenivorans (strain CJ2).